Here is a 336-residue protein sequence, read N- to C-terminus: Heme A synthase (336 aa).

8 consecutive transmembrane segments (helical) span residues 5–25, 92–112, 117–137, 153–173, 191–211, 253–273, 284–304, and 307–327; these read LTRW…VGGI, GRAT…KGII, ILSY…GWYM, LAFH…KLVK, LIFS…GALV, FIHR…IISL, VAFY…ITLL, and VPII…SVVI. Residue H255 coordinates heme. A heme-binding site is contributed by H315.

This sequence belongs to the COX15/CtaA family. Type 2 subfamily. In terms of assembly, interacts with CtaB. It depends on heme b as a cofactor.

It localises to the cell membrane. It carries out the reaction Fe(II)-heme o + 2 A + H2O = Fe(II)-heme a + 2 AH2. The protein operates within porphyrin-containing compound metabolism; heme A biosynthesis; heme A from heme O: step 1/1. Catalyzes the conversion of heme O to heme A by two successive hydroxylations of the methyl group at C8. The first hydroxylation forms heme I, the second hydroxylation results in an unstable dihydroxymethyl group, which spontaneously dehydrates, resulting in the formyl group of heme A. The protein is Heme A synthase of Rickettsia bellii (strain RML369-C).